A 474-amino-acid chain; its full sequence is Nuclear receptor ROR-alpha B (474 aa).

The segment at residues 14 to 89 (SIPCKICGDK…VGMSRDAVKF (76 aa)) is a DNA-binding region (nuclear receptor). 2 consecutive NR C4-type zinc fingers follow at residues 17-37 (CKIC…CEGC) and 53-72 (CPRQ…CQHC). The span at 98–124 (DSLFAEVQKHRQQQQDDKTGDESEKNQ) shows a compositional bias: basic and acidic residues. The disordered stretch occupies residues 98–144 (DSLFAEVQKHRQQQQDDKTGDESEKNQESQAPGEAEPLTPSYALSSS). The NR LBD domain maps to 223 to 461 (DLEHLSENIC…TRFPPLYKEL (239 aa)). The tract at residues 450 to 461 (VHTRFPPLYKEL) is AF-2.

The protein belongs to the nuclear hormone receptor family.

Its subcellular location is the nucleus. Nuclear receptor that binds DNA as a monomer to ROR response elements (RORE). Required for proper cerebellum development. This Danio rerio (Zebrafish) protein is Nuclear receptor ROR-alpha B (rorab).